A 456-amino-acid chain; its full sequence is GTPase Der (456 aa).

EngA-type G domains follow at residues 4-169 (PIVA…PSKE) and 178-353 (IQLA…EQHR). GTP contacts are provided by residues 10-17 (GRPNVGKS), 57-61 (DTGGL), 120-123 (NKCE), 184-191 (GRPNVGKS), 231-235 (DTAGI), and 296-299 (NKWD). The KH-like domain maps to 354-439 (RRVSTSVVNE…PLKLFWRGKQ (86 aa)).

The protein belongs to the TRAFAC class TrmE-Era-EngA-EngB-Septin-like GTPase superfamily. EngA (Der) GTPase family. As to quaternary structure, associates with the 50S ribosomal subunit.

In terms of biological role, GTPase that plays an essential role in the late steps of ribosome biogenesis. The sequence is that of GTPase Der from Prochlorococcus marinus (strain MIT 9211).